The sequence spans 279 residues: Prostatic spermine-binding protein (279 aa).

A signal peptide spans 1 to 17 (MLLLVTLALLAGPTCRA). At glutamine 18 the chain carries Pyrrolidone carboxylic acid. The Jacalin-type lectin domain occupies 18–151 (QNILGNNVGT…LNGMGFKWKN (134 aa)). Asparagine 62 carries N-linked (GlcNAc...) asparagine glycosylation. 2 stretches are compositionally biased toward acidic residues: residues 160–177 (DDDK…NEED) and 185–279 (NDHD…EEEE). The segment at 160-279 (DDDKEDDDDE…DDDNGDEEEE (120 aa)) is disordered.

The protein to mouse SBP. Prostate.

Spermine-binding protein is an androgen regulated ventral prostate glycoprotein that binds various polyamines. This Rattus norvegicus (Rat) protein is Prostatic spermine-binding protein (Sbp).